The sequence spans 498 residues: Bifunctional protein GlmU (498 aa).

The pyrophosphorylase stretch occupies residues 1–238; that stretch reads MSDAAVVILA…PALVAGVNDR (238 aa). Residues 9-12, K23, Q80, and 85-86 contribute to the UDP-N-acetyl-alpha-D-glucosamine site; these read LAAG and GT. Mg(2+) is bound at residue D111. Positions 148, 163, 178, and 236 each coordinate UDP-N-acetyl-alpha-D-glucosamine. N236 serves as a coordination point for Mg(2+). Residues 239-259 form a linker region; that stretch reads VQLADLGAELNRRVVAAHQRA. The interval 260–498 is N-acetyltransferase; that stretch reads GVTIVDPATT…TAKPAPATGE (239 aa). UDP-N-acetyl-alpha-D-glucosamine is bound by residues R341 and K359. The active-site Proton acceptor is H371. The UDP-N-acetyl-alpha-D-glucosamine site is built by Y374 and N385. Residues A388, 394–395, S413, and A431 contribute to the acetyl-CoA site; that span reads NY. A disordered region spans residues 470–498; it reads AAEAAAADGDTAAADRAAATAKPAPATGE.

It in the N-terminal section; belongs to the N-acetylglucosamine-1-phosphate uridyltransferase family. The protein in the C-terminal section; belongs to the transferase hexapeptide repeat family. In terms of assembly, homotrimer. Mg(2+) serves as cofactor.

It localises to the cytoplasm. It carries out the reaction alpha-D-glucosamine 1-phosphate + acetyl-CoA = N-acetyl-alpha-D-glucosamine 1-phosphate + CoA + H(+). The catalysed reaction is N-acetyl-alpha-D-glucosamine 1-phosphate + UTP + H(+) = UDP-N-acetyl-alpha-D-glucosamine + diphosphate. It participates in nucleotide-sugar biosynthesis; UDP-N-acetyl-alpha-D-glucosamine biosynthesis; N-acetyl-alpha-D-glucosamine 1-phosphate from alpha-D-glucosamine 6-phosphate (route II): step 2/2. It functions in the pathway nucleotide-sugar biosynthesis; UDP-N-acetyl-alpha-D-glucosamine biosynthesis; UDP-N-acetyl-alpha-D-glucosamine from N-acetyl-alpha-D-glucosamine 1-phosphate: step 1/1. Its pathway is bacterial outer membrane biogenesis; LPS lipid A biosynthesis. Catalyzes the last two sequential reactions in the de novo biosynthetic pathway for UDP-N-acetylglucosamine (UDP-GlcNAc). The C-terminal domain catalyzes the transfer of acetyl group from acetyl coenzyme A to glucosamine-1-phosphate (GlcN-1-P) to produce N-acetylglucosamine-1-phosphate (GlcNAc-1-P), which is converted into UDP-GlcNAc by the transfer of uridine 5-monophosphate (from uridine 5-triphosphate), a reaction catalyzed by the N-terminal domain. The sequence is that of Bifunctional protein GlmU from Mycolicibacterium gilvum (strain PYR-GCK) (Mycobacterium gilvum (strain PYR-GCK)).